Reading from the N-terminus, the 355-residue chain is UDP-N-acetylglucosamine--N-acetylmuramyl-(pentapeptide) pyrophosphoryl-undecaprenol N-acetylglucosamine transferase (355 aa).

UDP-N-acetyl-alpha-D-glucosamine-binding positions include 15–17 (TGG), Asn127, Arg163, Ser191, Ile245, 264–269 (ALTVSE), and Gln289.

The protein belongs to the glycosyltransferase 28 family. MurG subfamily.

Its subcellular location is the cell inner membrane. It catalyses the reaction di-trans,octa-cis-undecaprenyl diphospho-N-acetyl-alpha-D-muramoyl-L-alanyl-D-glutamyl-meso-2,6-diaminopimeloyl-D-alanyl-D-alanine + UDP-N-acetyl-alpha-D-glucosamine = di-trans,octa-cis-undecaprenyl diphospho-[N-acetyl-alpha-D-glucosaminyl-(1-&gt;4)]-N-acetyl-alpha-D-muramoyl-L-alanyl-D-glutamyl-meso-2,6-diaminopimeloyl-D-alanyl-D-alanine + UDP + H(+). It participates in cell wall biogenesis; peptidoglycan biosynthesis. Its function is as follows. Cell wall formation. Catalyzes the transfer of a GlcNAc subunit on undecaprenyl-pyrophosphoryl-MurNAc-pentapeptide (lipid intermediate I) to form undecaprenyl-pyrophosphoryl-MurNAc-(pentapeptide)GlcNAc (lipid intermediate II). This Yersinia enterocolitica serotype O:8 / biotype 1B (strain NCTC 13174 / 8081) protein is UDP-N-acetylglucosamine--N-acetylmuramyl-(pentapeptide) pyrophosphoryl-undecaprenol N-acetylglucosamine transferase.